We begin with the raw amino-acid sequence, 340 residues long: Eukaryotic translation initiation factor 3 subunit I (340 aa).

WD repeat units follow at residues 8-47 (GHERSLNQIKFNRDGDLLFSVAKDKIVCAWWSANGERLGT), 50-91 (GHQG…KVWD), 150-189 (CTESKATVAGWSYLGKYIIAGHEDGSVSQYDGKTGEQLEN), 194-233 (EFDHQINDIQFSQDRTYFITASKDKSAKLISSRNLAILKT), and 291-330 (GHFGPLNTVDVHPNGTAYASGGEDGYVRVHHFDKPYFDFM).

The protein belongs to the eIF-3 subunit I family. Component of the eukaryotic translation initiation factor 3 (eIF-3) complex.

It localises to the cytoplasm. Its function is as follows. Component of the eukaryotic translation initiation factor 3 (eIF-3) complex, which is involved in protein synthesis of a specialized repertoire of mRNAs and, together with other initiation factors, stimulates binding of mRNA and methionyl-tRNAi to the 40S ribosome. The eIF-3 complex specifically targets and initiates translation of a subset of mRNAs involved in cell proliferation. This Aspergillus fumigatus (strain CBS 144.89 / FGSC A1163 / CEA10) (Neosartorya fumigata) protein is Eukaryotic translation initiation factor 3 subunit I (tif34).